We begin with the raw amino-acid sequence, 96 residues long: Co-chaperonin GroES (96 aa).

The protein belongs to the GroES chaperonin family. As to quaternary structure, heptamer of 7 subunits arranged in a ring. Interacts with the chaperonin GroEL.

The protein resides in the cytoplasm. Its function is as follows. Together with the chaperonin GroEL, plays an essential role in assisting protein folding. The GroEL-GroES system forms a nano-cage that allows encapsulation of the non-native substrate proteins and provides a physical environment optimized to promote and accelerate protein folding. GroES binds to the apical surface of the GroEL ring, thereby capping the opening of the GroEL channel. The polypeptide is Co-chaperonin GroES (Herminiimonas arsenicoxydans).